The following is a 450-amino-acid chain: Exodeoxyribonuclease 7 large subunit (450 aa).

It belongs to the XseA family. In terms of assembly, heterooligomer composed of large and small subunits.

The protein resides in the cytoplasm. It catalyses the reaction Exonucleolytic cleavage in either 5'- to 3'- or 3'- to 5'-direction to yield nucleoside 5'-phosphates.. Bidirectionally degrades single-stranded DNA into large acid-insoluble oligonucleotides, which are then degraded further into small acid-soluble oligonucleotides. This is Exodeoxyribonuclease 7 large subunit from Listeria monocytogenes serovar 1/2a (strain ATCC BAA-679 / EGD-e).